A 34-amino-acid polypeptide reads, in one-letter code: Potassium channel toxin alpha-KTx 6.3 (34 aa).

Intrachain disulfides connect C3/C24, C9/C29, C13/C31, and C19/C34. C34 carries the cysteine amide modification.

The protein belongs to the short scorpion toxin superfamily. Potassium channel inhibitor family. Alpha-KTx 06 subfamily. In terms of processing, amidated. The amidated toxin shows 5-fold more affinity for Kv1.3/KCNA3 than the synthetic carboxylated form. In terms of tissue distribution, expressed by the venom gland.

The protein resides in the secreted. Potently blocks voltage-gated potassium channels Kv1.1/KCNA1 (IC(50)=7-11 nM) and Kv1.3/KCNA3 (IC(50)=11-29 pM). Also mildly blocks intermediate (IK) conductance calcium-activated potassium channels (KCa3.1/KCNN4) and ERG1/Kv11.1/KCNH2. Shows ability to suppress proliferation of lymphocytes, which are known to be sensitive to Kv1.3/KCNA3 homotetrameric channel block. The protein is Potassium channel toxin alpha-KTx 6.3 of Heterometrus spinifer (Asia giant forest scorpion).